Reading from the N-terminus, the 539-residue chain is 4-coumarate--CoA ligase 5 (539 aa).

6 residues coordinate ATP: S185, S186, G187, T188, T189, and K193. Residues Y235 and S239 each contribute to the (E)-4-coumaroyl-AMP site. A CoA-binding site is contributed by R256. An SBD1 region spans residues D258 to Q327. (E)-4-coumaroyl-AMP is bound by residues A305, Q327, G328, T332, and M340. The ATP site is built by Q327, G328, and T332. Residues G328–Y395 are SBD2. ATP-binding residues include D416 and R431. (E)-4-coumaroyl-AMP contacts are provided by K433 and K437. Positions 439 and 440 each coordinate CoA. Residue K522 coordinates ATP.

It belongs to the ATP-dependent AMP-binding enzyme family. Mg(2+) is required as a cofactor. Expressed in roots, stems, leaf blades, leaf sheaths and spikelets.

The enzyme catalyses (E)-ferulate + ATP + CoA = (E)-feruloyl-CoA + AMP + diphosphate. It carries out the reaction (E)-4-coumarate + ATP + CoA = (E)-4-coumaroyl-CoA + AMP + diphosphate. It catalyses the reaction (E)-sinapate + ATP + CoA = (E)-sinapoyl-CoA + AMP + diphosphate. The catalysed reaction is (E)-caffeate + ATP + CoA = (E)-caffeoyl-CoA + AMP + diphosphate. The enzyme catalyses (E)-cinnamate + ATP + CoA = (E)-cinnamoyl-CoA + AMP + diphosphate. It carries out the reaction (E)-ferulate + ATP + H(+) = (E)-feruloyl-AMP + diphosphate. It catalyses the reaction (E)-feruloyl-AMP + CoA = (E)-feruloyl-CoA + AMP + H(+). The catalysed reaction is (E)-4-coumarate + ATP + H(+) = (E)-4-coumaroyl-AMP + diphosphate. The enzyme catalyses (E)-4-coumaroyl-AMP + CoA = (E)-4-coumaroyl-CoA + AMP + H(+). It carries out the reaction (E)-sinapate + ATP + H(+) = (E)-sinapoyl-AMP + diphosphate. It catalyses the reaction (E)-sinapoyl-AMP + CoA = (E)-sinapoyl-CoA + AMP + H(+). The catalysed reaction is (E)-caffeate + ATP + H(+) = (E)-caffeoyl-AMP + diphosphate. The enzyme catalyses (E)-caffeoyl-AMP + CoA = (E)-caffeoyl-CoA + AMP + H(+). The protein operates within phytoalexin biosynthesis; 3,4',5-trihydroxystilbene biosynthesis; 3,4',5-trihydroxystilbene from trans-4-coumarate: step 1/2. Its function is as follows. Involved in the phenylpropanoid metabolism by mediating the activation of a number of hydroxycinnamates for the biosynthesis of monolignols and other phenolic secondary metabolites. Catalyzes the formation of CoA esters of cinnamate, 4-coumarate, caffeate and ferulate. Is also able to convert sinapate to its corresponding CoA ester, a reaction that is rarely observed in 4CL catalysis. Is more efficient with substrates in the following order: ferulate &gt; 4-coumarate &gt; sinapate &gt; caffeate &gt; cinnamate. Follows a two-step reaction mechanism, wherein the carboxylate substrate first undergoes adenylation by ATP, followed by a thioesterification in the presence of CoA to yield the final CoA thioesters. The protein is 4-coumarate--CoA ligase 5 of Oryza sativa subsp. japonica (Rice).